A 438-amino-acid chain; its full sequence is tRNA(Ile)-lysidine synthase (438 aa).

26–31 contributes to the ATP binding site; that stretch reads SGGADS.

Belongs to the tRNA(Ile)-lysidine synthase family.

The protein localises to the cytoplasm. It carries out the reaction cytidine(34) in tRNA(Ile2) + L-lysine + ATP = lysidine(34) in tRNA(Ile2) + AMP + diphosphate + H(+). Its function is as follows. Ligates lysine onto the cytidine present at position 34 of the AUA codon-specific tRNA(Ile) that contains the anticodon CAU, in an ATP-dependent manner. Cytidine is converted to lysidine, thus changing the amino acid specificity of the tRNA from methionine to isoleucine. This Parabacteroides distasonis (strain ATCC 8503 / DSM 20701 / CIP 104284 / JCM 5825 / NCTC 11152) protein is tRNA(Ile)-lysidine synthase.